The chain runs to 379 residues: Dual-specificity RNA methyltransferase RlmN (379 aa).

Residue Glu-95 is the Proton acceptor of the active site. The region spanning 101–345 (EETRGTLCVS…TTVRKTRGDD (245 aa)) is the Radical SAM core domain. A disulfide bridge links Cys-108 with Cys-350. The [4Fe-4S] cluster site is built by Cys-115, Cys-119, and Cys-122. S-adenosyl-L-methionine is bound by residues 176-177 (GE), Ser-208, 230-232 (SLH), and Asn-307. Cys-350 functions as the S-methylcysteine intermediate in the catalytic mechanism.

It belongs to the radical SAM superfamily. RlmN family. Requires [4Fe-4S] cluster as cofactor.

It localises to the cytoplasm. The enzyme catalyses adenosine(2503) in 23S rRNA + 2 reduced [2Fe-2S]-[ferredoxin] + 2 S-adenosyl-L-methionine = 2-methyladenosine(2503) in 23S rRNA + 5'-deoxyadenosine + L-methionine + 2 oxidized [2Fe-2S]-[ferredoxin] + S-adenosyl-L-homocysteine. The catalysed reaction is adenosine(37) in tRNA + 2 reduced [2Fe-2S]-[ferredoxin] + 2 S-adenosyl-L-methionine = 2-methyladenosine(37) in tRNA + 5'-deoxyadenosine + L-methionine + 2 oxidized [2Fe-2S]-[ferredoxin] + S-adenosyl-L-homocysteine. Functionally, specifically methylates position 2 of adenine 2503 in 23S rRNA and position 2 of adenine 37 in tRNAs. m2A2503 modification seems to play a crucial role in the proofreading step occurring at the peptidyl transferase center and thus would serve to optimize ribosomal fidelity. This is Dual-specificity RNA methyltransferase RlmN from Burkholderia lata (strain ATCC 17760 / DSM 23089 / LMG 22485 / NCIMB 9086 / R18194 / 383).